A 311-amino-acid chain; its full sequence is DNA replication terminus site-binding protein (311 aa).

It belongs to the Tus family.

It localises to the cytoplasm. Trans-acting protein required for termination of DNA replication. Binds to DNA replication terminator sequences (terA to terF) to prevent the passage of replication forks. The termination efficiency will be affected by the affinity of this protein for the terminator sequence. The chain is DNA replication terminus site-binding protein from Yersinia pseudotuberculosis serotype O:1b (strain IP 31758).